The primary structure comprises 344 residues: Fructose-1,6-bisphosphatase class 1 (344 aa).

Mg(2+) contacts are provided by Glu92, Asp115, Leu117, and Asp118. Substrate is bound by residues 118–121 (DGSS), Asn211, Tyr244, and Lys274. A Mg(2+)-binding site is contributed by Glu280.

This sequence belongs to the FBPase class 1 family. In terms of assembly, homotetramer. It depends on Mg(2+) as a cofactor.

The protein resides in the cytoplasm. The catalysed reaction is beta-D-fructose 1,6-bisphosphate + H2O = beta-D-fructose 6-phosphate + phosphate. It participates in carbohydrate biosynthesis; gluconeogenesis. The chain is Fructose-1,6-bisphosphatase class 1 from Aeromonas salmonicida (strain A449).